Consider the following 497-residue polypeptide: L-asparagine permease (497 aa).

12 helical membrane-spanning segments follow: residues 34-54 (QVQM…GAGA), 58-78 (MAGP…FFIL), 109-129 (VAGW…ITAV), 146-166 (VFAL…VKWF), 171-191 (FWFA…GTIF), 219-239 (LLPA…IELV), 264-284 (IGLF…WNAY), 298-318 (LGVP…ALSS), 353-373 (YAGI…NYLV), 378-398 (FEIV…FIMV), 422-442 (APFT…LMAF), and 448-468 (TYTI…WFGV).

This sequence belongs to the amino acid-polyamine-organocation (APC) superfamily. Amino acid transporter (AAT) (TC 2.A.3.1) family.

The protein resides in the cell inner membrane. This Salmonella typhimurium (strain LT2 / SGSC1412 / ATCC 700720) protein is L-asparagine permease (ansP).